A 211-amino-acid polypeptide reads, in one-letter code: Thymidylate kinase (211 aa).

11–18 (GPDGAGKT) lines the ATP pocket.

The protein belongs to the thymidylate kinase family.

The catalysed reaction is dTMP + ATP = dTDP + ADP. Functionally, phosphorylation of dTMP to form dTDP in both de novo and salvage pathways of dTTP synthesis. This is Thymidylate kinase from Streptococcus uberis (strain ATCC BAA-854 / 0140J).